A 505-amino-acid chain; its full sequence is Maturase K (505 aa).

Belongs to the intron maturase 2 family. MatK subfamily.

The protein localises to the plastid. It localises to the chloroplast. Usually encoded in the trnK tRNA gene intron. Probably assists in splicing its own and other chloroplast group II introns. The protein is Maturase K of Coffea arabica (Arabian coffee).